Consider the following 274-residue polypeptide: Undecaprenyl-diphosphatase (274 aa).

A run of 8 helical transmembrane segments spans residues 6 to 26 (SLFIAFVLGVVEGLTEFLPVS), 45 to 65 (AKTFEVIIQLGSILAVVVMFW), 94 to 114 (GHILLAMIPAVVLGLLFHDVI), 117 to 137 (LFAPKNVMYALVVGGFLLLAA), 155 to 174 (YRQAFMIGCFQCLALWPGFS), 191 to 211 (YAAAEFSFILAVPMMIGASGL), 223 to 243 (GDLPMFAVGFATAFVVALIAI), and 253 to 273 (ISFVPFAIYRFIVAGVVYMVF).

Belongs to the UppP family.

Its subcellular location is the cell inner membrane. It carries out the reaction di-trans,octa-cis-undecaprenyl diphosphate + H2O = di-trans,octa-cis-undecaprenyl phosphate + phosphate + H(+). In terms of biological role, catalyzes the dephosphorylation of undecaprenyl diphosphate (UPP). Confers resistance to bacitracin. In Serratia proteamaculans (strain 568), this protein is Undecaprenyl-diphosphatase.